The following is a 165-amino-acid chain: Cyclic pyranopterin monophosphate synthase (165 aa).

Residues 76–78 (LCH) and 119–120 (ME) contribute to the substrate site. D134 is an active-site residue.

It belongs to the MoaC family. As to quaternary structure, homohexamer; trimer of dimers.

The catalysed reaction is (8S)-3',8-cyclo-7,8-dihydroguanosine 5'-triphosphate = cyclic pyranopterin phosphate + diphosphate. Its pathway is cofactor biosynthesis; molybdopterin biosynthesis. Catalyzes the conversion of (8S)-3',8-cyclo-7,8-dihydroguanosine 5'-triphosphate to cyclic pyranopterin monophosphate (cPMP). This Photobacterium profundum (strain SS9) protein is Cyclic pyranopterin monophosphate synthase.